Here is a 206-residue protein sequence, read N- to C-terminus: GTP cyclohydrolase 1 (206 aa).

The span at 1–17 (MDAVTPKKDIPRPDSVR) shows a compositional bias: basic and acidic residues. Positions 1-23 (MDAVTPKKDIPRPDSVRRPSQQE) are disordered. Residues cysteine 95, histidine 98, and cysteine 166 each contribute to the Zn(2+) site.

This sequence belongs to the GTP cyclohydrolase I family. In terms of assembly, toroid-shaped homodecamer, composed of two pentamers of five dimers.

It carries out the reaction GTP + H2O = 7,8-dihydroneopterin 3'-triphosphate + formate + H(+). Its pathway is cofactor biosynthesis; 7,8-dihydroneopterin triphosphate biosynthesis; 7,8-dihydroneopterin triphosphate from GTP: step 1/1. This is GTP cyclohydrolase 1 from Hyphomonas neptunium (strain ATCC 15444).